Reading from the N-terminus, the 269-residue chain is Pertussis toxin subunit 1 (269 aa).

Residues 1–34 (MRCTRAIRQTARTGWLTWLAILAVTAPVTSPAWA) form the signal peptide. Tryptophan 60 provides a ligand contact to NAD(+). Catalysis depends on residues histidine 69 and glutamate 163. Cysteine 75 and cysteine 235 are disulfide-bonded.

This sequence belongs to the bacterial exotoxin subunit A family. As to quaternary structure, pertussis toxin contains five different chains, S1-S5. They are organized into 2 functional subunits: A, composed of S1 (which is toxic) and B, containing S2, S3, S5, and two copies of S4 (B binds to the membrane receptors). Dimers of S2-S4 and S3-S4 are held together by S5.

The protein resides in the secreted. In terms of biological role, S1 is an NAD-dependent ADP-ribosyltransferase, which plays a crucial role in the pathogenesis of B.pertussis causing disruption of normal host cellular regulation. It catalyzes the ADP-ribosylation of a cysteine in the alpha subunit of host heterotrimeric G proteins. In the absence of G proteins it also catalyzes the cleavage of NAD(+) into ADP-ribose and nicotinamide. It irreversibly uncouples the G-alpha GTP-binding proteins from their membrane receptors. The polypeptide is Pertussis toxin subunit 1 (ptxA) (Bordetella pertussis (strain Tohama I / ATCC BAA-589 / NCTC 13251)).